The primary structure comprises 485 residues: Glutamate--tRNA ligase (485 aa).

Positions 11-21 match the 'HIGH' region motif; that stretch reads PSPTGYMHVGN. Zn(2+) contacts are provided by C108, C110, C135, and D137. A 'KMSKS' region motif is present at residues 252 to 256; it reads KLSKR. K255 serves as a coordination point for ATP.

Belongs to the class-I aminoacyl-tRNA synthetase family. Glutamate--tRNA ligase type 1 subfamily. Monomer. Zn(2+) is required as a cofactor.

It is found in the cytoplasm. The enzyme catalyses tRNA(Glu) + L-glutamate + ATP = L-glutamyl-tRNA(Glu) + AMP + diphosphate. Its function is as follows. Catalyzes the attachment of glutamate to tRNA(Glu) in a two-step reaction: glutamate is first activated by ATP to form Glu-AMP and then transferred to the acceptor end of tRNA(Glu). The protein is Glutamate--tRNA ligase of Clostridium botulinum (strain Okra / Type B1).